A 400-amino-acid polypeptide reads, in one-letter code: Argininosuccinate synthase (400 aa).

An ATP-binding site is contributed by 8-16 (AYSGGLDTS). Y87 provides a ligand contact to L-citrulline. Residue G117 participates in ATP binding. Residues T119, N123, and D124 each contribute to the L-aspartate site. N123 is an L-citrulline binding site. L-citrulline is bound by residues R127, S175, E260, and Y272.

It belongs to the argininosuccinate synthase family. Type 1 subfamily. As to quaternary structure, homotetramer.

It is found in the cytoplasm. It carries out the reaction L-citrulline + L-aspartate + ATP = 2-(N(omega)-L-arginino)succinate + AMP + diphosphate + H(+). It participates in amino-acid biosynthesis; L-arginine biosynthesis; L-arginine from L-ornithine and carbamoyl phosphate: step 2/3. The protein is Argininosuccinate synthase of Mycobacterium sp. (strain KMS).